The primary structure comprises 274 residues: Thymidylate synthase (274 aa).

Arg-21 contributes to the dUMP binding site. His-51 serves as a coordination point for (6R)-5,10-methylene-5,6,7,8-tetrahydrofolate. Arg-123–Arg-124 contributes to the dUMP binding site. Cys-156 functions as the Nucleophile in the catalytic mechanism. DUMP is bound by residues Arg-176–Asp-179, Asn-187, and His-217–Tyr-219. Asp-179 contributes to the (6R)-5,10-methylene-5,6,7,8-tetrahydrofolate binding site. Ser-273 serves as a coordination point for (6R)-5,10-methylene-5,6,7,8-tetrahydrofolate.

It belongs to the thymidylate synthase family. Bacterial-type ThyA subfamily. Homodimer.

Its subcellular location is the cytoplasm. It catalyses the reaction dUMP + (6R)-5,10-methylene-5,6,7,8-tetrahydrofolate = 7,8-dihydrofolate + dTMP. Its pathway is pyrimidine metabolism; dTTP biosynthesis. Catalyzes the reductive methylation of 2'-deoxyuridine-5'-monophosphate (dUMP) to 2'-deoxythymidine-5'-monophosphate (dTMP) while utilizing 5,10-methylenetetrahydrofolate (mTHF) as the methyl donor and reductant in the reaction, yielding dihydrofolate (DHF) as a by-product. This enzymatic reaction provides an intracellular de novo source of dTMP, an essential precursor for DNA biosynthesis. The polypeptide is Thymidylate synthase (Francisella tularensis subsp. holarctica (strain FTNF002-00 / FTA)).